A 494-amino-acid chain; its full sequence is 4-trimethylaminobutyraldehyde dehydrogenase (494 aa).

N-acetylserine is present on S2. K30 bears the N6-acetyllysine; alternate mark. N6-succinyllysine; alternate is present on K30. Position 59 is an N6-succinyllysine (K59). Residues K180 and 232 to 236 each bind NAD(+); that span reads GSVPT. E254 (proton acceptor) is an active-site residue. C288 functions as the Nucleophile in the catalytic mechanism. N6-acetyllysine is present on residues K298 and K344. An NAD(+)-binding site is contributed by E391.

The protein belongs to the aldehyde dehydrogenase family. Homotetramer.

The protein resides in the cytoplasm. The protein localises to the cytosol. It catalyses the reaction 4-(trimethylamino)butanal + NAD(+) + H2O = 4-(trimethylamino)butanoate + NADH + 2 H(+). It carries out the reaction an aldehyde + NAD(+) + H2O = a carboxylate + NADH + 2 H(+). The catalysed reaction is 4-aminobutanal + NAD(+) + H2O = 4-aminobutanoate + NADH + 2 H(+). The enzyme catalyses formaldehyde + NAD(+) + H2O = formate + NADH + 2 H(+). It catalyses the reaction acetaldehyde + NAD(+) + H2O = acetate + NADH + 2 H(+). It carries out the reaction imidazole-4-acetaldehyde + NAD(+) + H2O = imidazole-4-acetate + NADH + 2 H(+). The catalysed reaction is acrolein + NAD(+) + H2O = acrylate + NADH + 2 H(+). The enzyme catalyses (5-hydroxyindol-3-yl)acetaldehyde + NAD(+) + H2O = (5-hydroxyindol-3-yl)acetate + NADH + 2 H(+). It catalyses the reaction 3,4-dihydroxyphenylacetaldehyde + NAD(+) + H2O = 3,4-dihydroxyphenylacetate + NADH + 2 H(+). It carries out the reaction spermine monoaldehyde + NAD(+) + H2O = N-(2-carboxyethyl)spermidine + NADH + 2 H(+). The catalysed reaction is propanal + NAD(+) + H2O = propanoate + NADH + 2 H(+). The enzyme catalyses butanal + NAD(+) + H2O = butanoate + NADH + 2 H(+). It catalyses the reaction pentanal + NAD(+) + H2O = pentanoate + NADH + 2 H(+). It carries out the reaction hexanal + NAD(+) + H2O = hexanoate + NADH + 2 H(+). Its pathway is amine and polyamine biosynthesis; carnitine biosynthesis. Functionally, converts gamma-trimethylaminobutyraldehyde into gamma-butyrobetaine with high efficiency (in vitro). Can catalyze the irreversible oxidation of a broad range of aldehydes to the corresponding acids in an NAD-dependent reaction, but with low efficiency. Catalyzes the oxidation of aldehydes arising from biogenic amines and polyamines. This is 4-trimethylaminobutyraldehyde dehydrogenase (ALDH9A1) from Bos taurus (Bovine).